Reading from the N-terminus, the 335-residue chain is Protease HtpX homolog (335 aa).

The next 3 helical transmembrane spans lie at 9 to 29 (VYMMLAVLGYFVMLLLASTIA), 42 to 62 (LFTSMVLLAGMILAISAAIIY), and 64 to 84 (ILAYAGVYISFYGLIIFLLII). Position 168 (His168) interacts with Zn(2+). Residue Glu169 is part of the active site. Residue His172 participates in Zn(2+) binding. The next 2 membrane-spanning stretches (helical) occupy residues 179–199 (AVMLLFGLLPSVIFYLGYALL) and 213–233 (AAIGIAAVIVSFIVQILVLAF). A Zn(2+)-binding site is contributed by Glu238.

It belongs to the peptidase M48B family. Requires Zn(2+) as cofactor.

It localises to the cell membrane. This is Protease HtpX homolog from Archaeoglobus fulgidus (strain ATCC 49558 / DSM 4304 / JCM 9628 / NBRC 100126 / VC-16).